The primary structure comprises 231 residues: Ribose-5-phosphate isomerase A (231 aa).

Residues 28 to 31 (TGST), 83 to 86 (DGAD), and 96 to 99 (KGGG) contribute to the substrate site. The active-site Proton acceptor is the Glu105. Lys123 contacts substrate.

The protein belongs to the ribose 5-phosphate isomerase family. As to quaternary structure, homodimer.

It carries out the reaction aldehydo-D-ribose 5-phosphate = D-ribulose 5-phosphate. The protein operates within carbohydrate degradation; pentose phosphate pathway; D-ribose 5-phosphate from D-ribulose 5-phosphate (non-oxidative stage): step 1/1. Catalyzes the reversible conversion of ribose-5-phosphate to ribulose 5-phosphate. In Sinorhizobium fredii (strain NBRC 101917 / NGR234), this protein is Ribose-5-phosphate isomerase A.